A 412-amino-acid chain; its full sequence is MKKYLVGGAVRDRLLQIPVKERDWVVIGTTLQDMLKAGYQQVGKDFPVFLHPKSHEEYALARIEKKSATGGYTGFTYKASSEITLEEDLKRRDLTINAIACDENGSLIDPYNGQRDLNQRWLRHVSEAFCEDPLRVLRVARFAAQLAYLNFRIVPETRLMMQHMISELPLLSPERIWKETEKALATRDPQIYFQVLRDCGALKTLFPEIDALFGVPAPAKWHPEIDTGIHTMMTVAMAARLSDSIAVRFASLCHDIGKGLTPRDHWPSHHGHGPAGIPLVQSLCQRLRVPNSIRNLAIIVTEYHDLLHYAVKLKPKTLIKLFYAIDVWRRPERLEQIIIISEADARGRAGYENHFYKPGQFIREAYRIASSIMPCQVISHNLTGNKIGEKLRQYRQQAIATWKQQNYESKQQ.

The ATP site is built by glycine 8 and arginine 11. Glycine 8 and arginine 11 together coordinate CTP. Mg(2+)-binding residues include glutamate 21 and aspartate 23. ATP-binding residues include arginine 92, arginine 138, and arginine 141. CTP-binding residues include arginine 92, arginine 138, and arginine 141. The HD domain maps to 227–328 (TGIHTMMTVA…IKLFYAIDVW (102 aa)).

Belongs to the tRNA nucleotidyltransferase/poly(A) polymerase family. Bacterial CCA-adding enzyme type 1 subfamily. In terms of assembly, monomer. Can also form homodimers and oligomers. Mg(2+) is required as a cofactor. It depends on Ni(2+) as a cofactor.

It catalyses the reaction a tRNA precursor + 2 CTP + ATP = a tRNA with a 3' CCA end + 3 diphosphate. The catalysed reaction is a tRNA with a 3' CCA end + 2 CTP + ATP = a tRNA with a 3' CCACCA end + 3 diphosphate. Its function is as follows. Catalyzes the addition and repair of the essential 3'-terminal CCA sequence in tRNAs without using a nucleic acid template. Adds these three nucleotides in the order of C, C, and A to the tRNA nucleotide-73, using CTP and ATP as substrates and producing inorganic pyrophosphate. tRNA 3'-terminal CCA addition is required both for tRNA processing and repair. Also involved in tRNA surveillance by mediating tandem CCA addition to generate a CCACCA at the 3' terminus of unstable tRNAs. While stable tRNAs receive only 3'-terminal CCA, unstable tRNAs are marked with CCACCA and rapidly degraded. The polypeptide is Multifunctional CCA protein (Baumannia cicadellinicola subsp. Homalodisca coagulata).